We begin with the raw amino-acid sequence, 185 residues long: MAEDRFPGWHGTTILAVRRGGEVVVAGDGQVSLGQTVIKGTARKVRRLSPGGHEVVAGFAGSTADAFTLLERLEKKLEAAPGQLARACVELAKDWRMDKYLRNLEAMLIVTDGETLLVLTGAGDVLEPEHDVTAIGSGGNFALAAARGLMATDLPAEEIARKAMAIAADICVYTNGNLTVERISK.

The active site involves T12. Positions 168, 171, and 174 each coordinate Na(+).

It belongs to the peptidase T1B family. HslV subfamily. In terms of assembly, a double ring-shaped homohexamer of HslV is capped on each side by a ring-shaped HslU homohexamer. The assembly of the HslU/HslV complex is dependent on binding of ATP.

It is found in the cytoplasm. It carries out the reaction ATP-dependent cleavage of peptide bonds with broad specificity.. With respect to regulation, allosterically activated by HslU binding. In terms of biological role, protease subunit of a proteasome-like degradation complex believed to be a general protein degrading machinery. This Cereibacter sphaeroides (strain ATCC 17023 / DSM 158 / JCM 6121 / CCUG 31486 / LMG 2827 / NBRC 12203 / NCIMB 8253 / ATH 2.4.1.) (Rhodobacter sphaeroides) protein is ATP-dependent protease subunit HslV.